Consider the following 357-residue polypeptide: Tetraacyldisaccharide 4'-kinase (357 aa).

67–74 serves as a coordination point for ATP; the sequence is SVGGTGKT.

Belongs to the LpxK family.

It carries out the reaction a lipid A disaccharide + ATP = a lipid IVA + ADP + H(+). It functions in the pathway glycolipid biosynthesis; lipid IV(A) biosynthesis; lipid IV(A) from (3R)-3-hydroxytetradecanoyl-[acyl-carrier-protein] and UDP-N-acetyl-alpha-D-glucosamine: step 6/6. Functionally, transfers the gamma-phosphate of ATP to the 4'-position of a tetraacyldisaccharide 1-phosphate intermediate (termed DS-1-P) to form tetraacyldisaccharide 1,4'-bis-phosphate (lipid IVA). This chain is Tetraacyldisaccharide 4'-kinase, found in Syntrophotalea carbinolica (strain DSM 2380 / NBRC 103641 / GraBd1) (Pelobacter carbinolicus).